The chain runs to 304 residues: Quinolinate synthase (304 aa).

Iminosuccinate-binding residues include His24 and Ser41. Cys86 serves as a coordination point for [4Fe-4S] cluster. Iminosuccinate is bound by residues 112–114 (YVN) and Ser129. Cys171 provides a ligand contact to [4Fe-4S] cluster. Residues 197 to 199 (HPE) and Thr214 each bind iminosuccinate. Cys259 is a [4Fe-4S] cluster binding site.

Belongs to the quinolinate synthase family. Type 2 subfamily. It depends on [4Fe-4S] cluster as a cofactor.

Its subcellular location is the cytoplasm. The catalysed reaction is iminosuccinate + dihydroxyacetone phosphate = quinolinate + phosphate + 2 H2O + H(+). Its pathway is cofactor biosynthesis; NAD(+) biosynthesis; quinolinate from iminoaspartate: step 1/1. Functionally, catalyzes the condensation of iminoaspartate with dihydroxyacetone phosphate to form quinolinate. This is Quinolinate synthase from Methanosarcina barkeri (strain Fusaro / DSM 804).